A 312-amino-acid polypeptide reads, in one-letter code: uncharacterized protein (312 aa).

Basic and acidic residues-rich tracts occupy residues 1–17 and 28–39; these read MAKY…EQLE and PDRDGPRHSAKL. The interval 1 to 39 is disordered; it reads MAKYDHLELVRLPEQLERRKHGGGSPPPDRDGPRHSAKL.

This is an uncharacterized protein from Sinorhizobium fredii (strain NBRC 101917 / NGR234).